The chain runs to 156 residues: Large ribosomal subunit protein uL23 (156 aa).

The segment covering 1–19 has biased composition (basic and acidic residues); that stretch reads MAPKAKKEAPAPPKAEAKA. The disordered stretch occupies residues 1-67; that stretch reads MAPKAKKEAP…PKYPRKSAPR (67 aa). Ala-2 carries the n,N,N-trimethylalanine modification. Lys-14 participates in a covalent cross-link: Glycyl lysine isopeptide (Lys-Gly) (interchain with G-Cter in SUMO2). Over residues 20–67 the composition is skewed to basic residues; sequence KALKAKKAVLKGVHSHKKKKIRTSPTFRRPKTLRLRRQPKYPRKSAPR. A beta-like import receptor binding (BIB) domain region spans residues 32 to 74; sequence VHSHKKKKIRTSPTFRRPKTLRLRRQPKYPRKSAPRRNKLDHY. Arg-41 carries the post-translational modification Citrulline. At Ser-43 the chain carries Phosphoserine. Position 45 is a phosphothreonine (Thr-45). The residue at position 70 (Lys-70) is an N6-acetyllysine.

Belongs to the universal ribosomal protein uL23 family. Component of the large ribosomal subunit. Interacts with LYAR and GNL2. Interacts with MDM2; this interaction may promote MDM2-mediated p53/TP53 polyubiquitination. Directly interacts (via BIB domain) with IPO5, IPO7, KPNB1 and TNPO1; these interactions are involved in RPL23A nuclear import for the assembly of ribosomal subunits. Interacts with IPO8. N-terminus is methylated by METTL11A/NTM1. In terms of processing, citrullinated by PADI4.

It localises to the cytoplasm. Its subcellular location is the nucleus. Component of the large ribosomal subunit. The ribosome is a large ribonucleoprotein complex responsible for the synthesis of proteins in the cell. Binds a specific region on the 26S rRNA. May promote p53/TP53 degradation possibly through the stimulation of MDM2-mediated TP53 polyubiquitination. The polypeptide is Large ribosomal subunit protein uL23 (RPL23A) (Bos taurus (Bovine)).